Reading from the N-terminus, the 195-residue chain is Imidazoleglycerol-phosphate dehydratase (195 aa).

Belongs to the imidazoleglycerol-phosphate dehydratase family.

The protein localises to the cytoplasm. The enzyme catalyses D-erythro-1-(imidazol-4-yl)glycerol 3-phosphate = 3-(imidazol-4-yl)-2-oxopropyl phosphate + H2O. Its pathway is amino-acid biosynthesis; L-histidine biosynthesis; L-histidine from 5-phospho-alpha-D-ribose 1-diphosphate: step 6/9. This is Imidazoleglycerol-phosphate dehydratase from Thermotoga maritima (strain ATCC 43589 / DSM 3109 / JCM 10099 / NBRC 100826 / MSB8).